Consider the following 351-residue polypeptide: Cytochrome c biogenesis protein CcsA (351 aa).

A run of 8 helical transmembrane segments spans residues 17-37, 38-58, 68-88, 97-117, 143-163, 259-279, 286-306, and 320-340; these read VLFL…LPAI, NALG…LLGA, LSNL…VHLI, LVGV…TLTL, MMLS…FLVI, IIGL…VWAN, WSWD…AAYL, and AILA…VNLL.

Belongs to the CcmF/CycK/Ccl1/NrfE/CcsA family. As to quaternary structure, may interact with ccs1.

Its subcellular location is the cellular thylakoid membrane. Functionally, required during biogenesis of c-type cytochromes (cytochrome c6 and cytochrome f) at the step of heme attachment. This chain is Cytochrome c biogenesis protein CcsA, found in Trichormus variabilis (strain ATCC 29413 / PCC 7937) (Anabaena variabilis).